Here is a 141-residue protein sequence, read N- to C-terminus: Ribonuclease VapC16 (141 aa).

D99 contacts Mg(2+). Residues 99–141 (DHAHTAHRRASGSPSTSIRPCAHRPGTAAWPDDHHRRRPVSCL) form a disordered region.

It belongs to the PINc/VapC protein family. It depends on Mg(2+) as a cofactor.

Functionally, toxic component of a type II toxin-antitoxin (TA) system. An RNase. The cognate antitoxin is VapB16. The protein is Ribonuclease VapC16 of Mycobacterium tuberculosis (strain ATCC 25618 / H37Rv).